A 139-amino-acid chain; its full sequence is Superoxide dismutase [Cu-Zn] (139 aa).

Residue Cys6 is the site of S-palmitoyl cysteine attachment. Cu cation-binding residues include His47 and His49. Zn(2+) is bound by residues His72, His81, and Asp84. Residue His114 participates in Cu cation binding. The segment covering 118–129 has biased composition (basic and acidic residues); the sequence is DDLGKGGNDESL. The segment at 118–139 is disordered; it reads DDLGKGGNDESLKTGNAGGRMA.

This sequence belongs to the Cu-Zn superoxide dismutase family. In terms of assembly, homodimer. Cu cation is required as a cofactor. Requires Zn(2+) as cofactor.

The protein localises to the cytoplasm. It is found in the nucleus. It catalyses the reaction 2 superoxide + 2 H(+) = H2O2 + O2. Functionally, destroys radicals which are normally produced within the cells and which are toxic to biological systems. The polypeptide is Superoxide dismutase [Cu-Zn] (sod1) (Lampanyctus crocodilus (Jewel lanternfish)).